The chain runs to 240 residues: Phosphoribosylaminoimidazole-succinocarboxamide synthase (240 aa).

It belongs to the SAICAR synthetase family.

The enzyme catalyses 5-amino-1-(5-phospho-D-ribosyl)imidazole-4-carboxylate + L-aspartate + ATP = (2S)-2-[5-amino-1-(5-phospho-beta-D-ribosyl)imidazole-4-carboxamido]succinate + ADP + phosphate + 2 H(+). It functions in the pathway purine metabolism; IMP biosynthesis via de novo pathway; 5-amino-1-(5-phospho-D-ribosyl)imidazole-4-carboxamide from 5-amino-1-(5-phospho-D-ribosyl)imidazole-4-carboxylate: step 1/2. This chain is Phosphoribosylaminoimidazole-succinocarboxamide synthase, found in Wolbachia sp. subsp. Drosophila simulans (strain wRi).